The following is a 300-amino-acid chain: Putative hydro-lyase Dshi_3152 (300 aa).

This sequence belongs to the D-glutamate cyclase family.

The protein is Putative hydro-lyase Dshi_3152 of Dinoroseobacter shibae (strain DSM 16493 / NCIMB 14021 / DFL 12).